The chain runs to 677 residues: DNA gyrase subunit B, novobiocin-resistant (677 aa).

Residues 1–23 (MTTYDTRTATDTRGSEQPGHVGT) are disordered. A novobiocin-binding region spans residues 154–295 (IWTDGHRWTQ…RLLSAEIALQ (142 aa)). Residues 456 to 570 (SEIFIVEGDS…EGHVHLSRPP (115 aa)) form the Toprim domain. 3 residues coordinate Mg(2+): Glu-462, Asp-535, and Asp-537.

Belongs to the type II topoisomerase GyrB family. Heterotetramer, composed of two GyrA and two GyrB chains. In the heterotetramer, GyrA contains the active site tyrosine that forms a transient covalent intermediate with DNA, while GyrB binds cofactors and catalyzes ATP hydrolysis. Mg(2+) is required as a cofactor. Requires Mn(2+) as cofactor. Ca(2+) serves as cofactor.

The protein localises to the cytoplasm. The catalysed reaction is ATP-dependent breakage, passage and rejoining of double-stranded DNA.. A type II topoisomerase that negatively supercoils closed circular double-stranded (ds) DNA in an ATP-dependent manner to modulate DNA topology and maintain chromosomes in an underwound state. Negative supercoiling favors strand separation, and DNA replication, transcription, recombination and repair, all of which involve strand separation. Also able to catalyze the interconversion of other topological isomers of dsDNA rings, including catenanes and knotted rings. Type II topoisomerases break and join 2 DNA strands simultaneously in an ATP-dependent manner. This is DNA gyrase subunit B, novobiocin-resistant from Streptomyces niveus (Streptomyces spheroides).